The chain runs to 117 residues: Conotoxin vil14.3 (117 aa).

A signal peptide spans 1-22 (MGFRVLVLVVMATTSALPFTFS). A propeptide spanning residues 23 to 90 (EEPGRSPFRP…FAELSVGQRR (68 aa)) is cleaved from the precursor. The tract at residues 53-79 (RADGQPPDMRQPEMRRPEMRRPEVRQP) is disordered. The segment covering 62–79 (RQPEMRRPEMRRPEVRQP) has biased composition (basic and acidic residues). 2 disulfides stabilise this stretch: Cys-96-Cys-116 and Cys-100-Cys-112.

The protein belongs to the conotoxin R superfamily. As to expression, expressed by the venom duct.

The protein localises to the secreted. In Conus villepinii (Villepin's cone), this protein is Conotoxin vil14.3.